We begin with the raw amino-acid sequence, 124 residues long: Alkaline proteinase inhibitor (124 aa).

Positions 1 to 24 are cleaved as a signal peptide; that stretch reads MKGTLTRAALAAGGMMVTSAVMAG. A disulfide bond links C47 and C70.

It belongs to the protease inhibitor I38 family. As to quaternary structure, monomer.

It localises to the periplasm. Functionally, inhibitor of the alkaline protease. Inhibits SMP by formation of a non-covalent complex with a molar ratio of 1:1 and shows a high specificity. This Serratia marcescens protein is Alkaline proteinase inhibitor (inh).